The chain runs to 547 residues: Chaperonin GroEL (547 aa).

Residues 30-33 (TLGP), Lys-51, 87-91 (DGTTT), Gly-415, and Asp-495 each bind ATP.

Belongs to the chaperonin (HSP60) family. As to quaternary structure, forms a cylinder of 14 subunits composed of two heptameric rings stacked back-to-back. Interacts with the co-chaperonin GroES.

The protein localises to the cytoplasm. The enzyme catalyses ATP + H2O + a folded polypeptide = ADP + phosphate + an unfolded polypeptide.. In terms of biological role, together with its co-chaperonin GroES, plays an essential role in assisting protein folding. The GroEL-GroES system forms a nano-cage that allows encapsulation of the non-native substrate proteins and provides a physical environment optimized to promote and accelerate protein folding. The chain is Chaperonin GroEL from Shewanella pealeana (strain ATCC 700345 / ANG-SQ1).